The following is a 520-amino-acid chain: UDP-N-acetylmuramoyl-L-alanyl-D-glutamate--2,6-diaminopimelate ligase (520 aa).

Leucine 48 lines the UDP-N-acetyl-alpha-D-muramoyl-L-alanyl-D-glutamate pocket. 134 to 140 (GTSGKTT) is an ATP binding site. Residues 176–177 (TT), serine 203, and arginine 211 each bind UDP-N-acetyl-alpha-D-muramoyl-L-alanyl-D-glutamate. Residue lysine 243 is modified to N6-carboxylysine. Residues arginine 405, 429–432 (DNPR), glycine 483, and glutamate 487 contribute to the meso-2,6-diaminopimelate site. The Meso-diaminopimelate recognition motif signature appears at 429-432 (DNPR).

Belongs to the MurCDEF family. MurE subfamily. It depends on Mg(2+) as a cofactor. Post-translationally, carboxylation is probably crucial for Mg(2+) binding and, consequently, for the gamma-phosphate positioning of ATP.

It is found in the cytoplasm. It catalyses the reaction UDP-N-acetyl-alpha-D-muramoyl-L-alanyl-D-glutamate + meso-2,6-diaminopimelate + ATP = UDP-N-acetyl-alpha-D-muramoyl-L-alanyl-gamma-D-glutamyl-meso-2,6-diaminopimelate + ADP + phosphate + H(+). The protein operates within cell wall biogenesis; peptidoglycan biosynthesis. Catalyzes the addition of meso-diaminopimelic acid to the nucleotide precursor UDP-N-acetylmuramoyl-L-alanyl-D-glutamate (UMAG) in the biosynthesis of bacterial cell-wall peptidoglycan. The chain is UDP-N-acetylmuramoyl-L-alanyl-D-glutamate--2,6-diaminopimelate ligase from Mycobacterium avium (strain 104).